Consider the following 157-residue polypeptide: 17.6 kDa class I heat shock protein 3 (157 aa).

A sHSP domain is found at D43 to G157.

This sequence belongs to the small heat shock protein (HSP20) family. May form oligomeric structures.

The protein localises to the cytoplasm. This chain is 17.6 kDa class I heat shock protein 3 (HSP17.6C), found in Arabidopsis thaliana (Mouse-ear cress).